A 118-amino-acid chain; its full sequence is Phosphoribosyl-AMP cyclohydrolase (118 aa).

Asp-85 serves as a coordination point for Mg(2+). Cys-86 contributes to the Zn(2+) binding site. 2 residues coordinate Mg(2+): Asp-87 and Asp-89. Residues Cys-102 and Cys-109 each contribute to the Zn(2+) site.

The protein belongs to the PRA-CH family. In terms of assembly, homodimer. Requires Mg(2+) as cofactor. It depends on Zn(2+) as a cofactor.

It is found in the cytoplasm. It carries out the reaction 1-(5-phospho-beta-D-ribosyl)-5'-AMP + H2O = 1-(5-phospho-beta-D-ribosyl)-5-[(5-phospho-beta-D-ribosylamino)methylideneamino]imidazole-4-carboxamide. It participates in amino-acid biosynthesis; L-histidine biosynthesis; L-histidine from 5-phospho-alpha-D-ribose 1-diphosphate: step 3/9. Functionally, catalyzes the hydrolysis of the adenine ring of phosphoribosyl-AMP. The protein is Phosphoribosyl-AMP cyclohydrolase of Sulfurisphaera tokodaii (strain DSM 16993 / JCM 10545 / NBRC 100140 / 7) (Sulfolobus tokodaii).